The chain runs to 901 residues: Mediator of RNA polymerase II transcription subunit 14 (901 aa).

The protein belongs to the Mediator complex subunit 14 family. Component of the Mediator complex.

The protein resides in the nucleus. Functionally, component of the Mediator complex, a coactivator involved in the regulated transcription of nearly all RNA polymerase II-dependent genes. Mediator functions as a bridge to convey information from gene-specific regulatory proteins to the basal RNA polymerase II transcription machinery. Mediator is recruited to promoters by direct interactions with regulatory proteins and serves as a scaffold for the assembly of a functional preinitiation complex with RNA polymerase II and the general transcription factors. The chain is Mediator of RNA polymerase II transcription subunit 14 (RGR1) from Yarrowia lipolytica (strain CLIB 122 / E 150) (Yeast).